A 175-amino-acid chain; its full sequence is Co-chaperone protein HscB homolog (175 aa).

The J domain maps to 7-79 (SHFELFHLPA…LKRATYLLHL (73 aa)).

It belongs to the HscB family. As to quaternary structure, interacts with HscA and stimulates its ATPase activity.

Co-chaperone involved in the maturation of iron-sulfur cluster-containing proteins. Seems to help targeting proteins to be folded toward HscA. The protein is Co-chaperone protein HscB homolog of Burkholderia thailandensis (strain ATCC 700388 / DSM 13276 / CCUG 48851 / CIP 106301 / E264).